The chain runs to 571 residues: Dihydroxy-acid dehydratase (571 aa).

Cys-56 contacts [2Fe-2S] cluster. Mg(2+) is bound at residue Asp-88. Position 129 (Cys-129) interacts with [2Fe-2S] cluster. Residues Asp-130 and Lys-131 each coordinate Mg(2+). Lys-131 carries the N6-carboxylysine modification. Cys-201 is a [2Fe-2S] cluster binding site. Glu-452 is a binding site for Mg(2+). The active-site Proton acceptor is Ser-478.

Belongs to the IlvD/Edd family. As to quaternary structure, homodimer. [2Fe-2S] cluster is required as a cofactor. The cofactor is Mg(2+).

It carries out the reaction (2R)-2,3-dihydroxy-3-methylbutanoate = 3-methyl-2-oxobutanoate + H2O. It catalyses the reaction (2R,3R)-2,3-dihydroxy-3-methylpentanoate = (S)-3-methyl-2-oxopentanoate + H2O. The protein operates within amino-acid biosynthesis; L-isoleucine biosynthesis; L-isoleucine from 2-oxobutanoate: step 3/4. It functions in the pathway amino-acid biosynthesis; L-valine biosynthesis; L-valine from pyruvate: step 3/4. In terms of biological role, functions in the biosynthesis of branched-chain amino acids. Catalyzes the dehydration of (2R,3R)-2,3-dihydroxy-3-methylpentanoate (2,3-dihydroxy-3-methylvalerate) into 2-oxo-3-methylpentanoate (2-oxo-3-methylvalerate) and of (2R)-2,3-dihydroxy-3-methylbutanoate (2,3-dihydroxyisovalerate) into 2-oxo-3-methylbutanoate (2-oxoisovalerate), the penultimate precursor to L-isoleucine and L-valine, respectively. This Streptococcus mutans serotype c (strain ATCC 700610 / UA159) protein is Dihydroxy-acid dehydratase.